The sequence spans 23 residues: Unknown protein NF005 from 2D-PAGE (23 aa).

The segment at 1-23 is disordered; it reads AGKARKQLSKNEDTKLKEQYIXD. The span at 9–23 shows a compositional bias: basic and acidic residues; the sequence is SKNEDTKLKEQYIXD.

This is Unknown protein NF005 from 2D-PAGE from Naegleria fowleri (Brain eating amoeba).